We begin with the raw amino-acid sequence, 426 residues long: Adenylosuccinate synthetase (426 aa).

Residues 12–18 (GDEGKGK) and 40–42 (GHT) each bind GTP. The Proton acceptor role is filled by aspartate 13. Aspartate 13 and glycine 40 together coordinate Mg(2+). IMP-binding positions include 13–16 (DEGK), 38–41 (NAGH), threonine 130, arginine 144, glutamine 224, threonine 239, and arginine 303. Catalysis depends on histidine 41, which acts as the Proton donor. 299–305 (TVTNRVR) serves as a coordination point for substrate. GTP contacts are provided by residues arginine 305, 331–333 (KLD), and 413–415 (STG).

The protein belongs to the adenylosuccinate synthetase family. As to quaternary structure, homodimer. The cofactor is Mg(2+).

The protein resides in the cytoplasm. The catalysed reaction is IMP + L-aspartate + GTP = N(6)-(1,2-dicarboxyethyl)-AMP + GDP + phosphate + 2 H(+). It functions in the pathway purine metabolism; AMP biosynthesis via de novo pathway; AMP from IMP: step 1/2. In terms of biological role, plays an important role in the de novo pathway of purine nucleotide biosynthesis. Catalyzes the first committed step in the biosynthesis of AMP from IMP. This Anaplasma marginale (strain St. Maries) protein is Adenylosuccinate synthetase.